A 645-amino-acid chain; its full sequence is COP9 signalosome complex subunit 10 (645 aa).

A compositionally biased stretch (acidic residues) spans 1-45; sequence MSDEDNNYDDFMLSDDEGMESIEMEEETDDEDKQNIEINEDNSQD. The interval 1 to 63 is disordered; sequence MSDEDNNYDD…HKQHEQGTFE (63 aa). Residues 46–63 show a composition bias toward basic and acidic residues; that stretch reads DQDRGAARHKQHEQGTFE. Positions 348-543 constitute a PCI domain; it reads DLSFALMRYY…DLVYFGDENK (196 aa).

Component of a COP9 signalosome-like (CSN) complex, composed of at least RRI1/CSN5, CSN9, RRI2/CSN10, PCI8/CSN11, CSN12 and CSI1. In the complex, it probably interacts directly with CSN12.

It is found in the cytoplasm. The protein localises to the nucleus. Functionally, component of the COP9 signalosome (CSN) complex that acts as an regulator of the ubiquitin (Ubl) conjugation pathway by mediating the deneddylation of the cullin subunit of SCF-type E3 ubiquitin-protein ligase complexes. The CSN complex is involved in the regulation of the mating pheromone response. This Saccharomyces cerevisiae (strain ATCC 204508 / S288c) (Baker's yeast) protein is COP9 signalosome complex subunit 10 (RRI2).